The following is a 323-amino-acid chain: tRNA U34 carboxymethyltransferase (323 aa).

Residues Lys-91, Trp-105, Lys-110, Gly-130, 152 to 154 (DPT), 181 to 182 (IE), Met-196, Tyr-200, and Arg-315 contribute to the carboxy-S-adenosyl-L-methionine site.

This sequence belongs to the class I-like SAM-binding methyltransferase superfamily. CmoB family. Homotetramer.

It carries out the reaction carboxy-S-adenosyl-L-methionine + 5-hydroxyuridine(34) in tRNA = 5-carboxymethoxyuridine(34) in tRNA + S-adenosyl-L-homocysteine + H(+). In terms of biological role, catalyzes carboxymethyl transfer from carboxy-S-adenosyl-L-methionine (Cx-SAM) to 5-hydroxyuridine (ho5U) to form 5-carboxymethoxyuridine (cmo5U) at position 34 in tRNAs. This chain is tRNA U34 carboxymethyltransferase, found in Salmonella typhi.